The chain runs to 122 residues: Large ribosomal subunit protein uL14 (122 aa).

The protein belongs to the universal ribosomal protein uL14 family. As to quaternary structure, part of the 50S ribosomal subunit. Forms a cluster with proteins L3 and L19. In the 70S ribosome, L14 and L19 interact and together make contacts with the 16S rRNA in bridges B5 and B8.

In terms of biological role, binds to 23S rRNA. Forms part of two intersubunit bridges in the 70S ribosome. This is Large ribosomal subunit protein uL14 from Thermosipho africanus (strain TCF52B).